Reading from the N-terminus, the 557-residue chain is UvrABC system protein C (557 aa).

A GIY-YIG domain is found at 14–89 (EEPGVYIFKN…IKKYRPKYNV (76 aa)). The UVR domain maps to 194–229 (EEVFDYLKEKMETHSKMLDFENAAKYRDLLLNLSNV).

Belongs to the UvrC family. As to quaternary structure, interacts with UvrB in an incision complex.

It localises to the cytoplasm. The UvrABC repair system catalyzes the recognition and processing of DNA lesions. UvrC both incises the 5' and 3' sides of the lesion. The N-terminal half is responsible for the 3' incision and the C-terminal half is responsible for the 5' incision. The protein is UvrABC system protein C of Thermotoga sp. (strain RQ2).